The sequence spans 281 residues: Pantothenate synthetase (281 aa).

31 to 38 (MGNLHAGH) serves as a coordination point for ATP. Catalysis depends on H38, which acts as the Proton donor. A (R)-pantoate-binding site is contributed by Q62. Q62 lines the beta-alanine pocket. 150-153 (GKKD) contacts ATP. Q156 contacts (R)-pantoate. ATP is bound by residues V179 and 187 to 190 (MSSR).

This sequence belongs to the pantothenate synthetase family. Homodimer.

The protein resides in the cytoplasm. The enzyme catalyses (R)-pantoate + beta-alanine + ATP = (R)-pantothenate + AMP + diphosphate + H(+). It participates in cofactor biosynthesis; (R)-pantothenate biosynthesis; (R)-pantothenate from (R)-pantoate and beta-alanine: step 1/1. In terms of biological role, catalyzes the condensation of pantoate with beta-alanine in an ATP-dependent reaction via a pantoyl-adenylate intermediate. This is Pantothenate synthetase from Xylella fastidiosa (strain M23).